The chain runs to 314 residues: Transmembrane protein 178B (314 aa).

The N-terminal stretch at Met1–Ser24 is a signal peptide. Residues Asp32 to Arg83 form a disordered region. Residues His36–Gly45 are compositionally biased toward basic residues. The next 3 helical transmembrane spans lie at Ala194–Gly214, Leu228–Ile248, and Met274–Ala294.

The protein belongs to the TMEM178 family.

The protein resides in the membrane. This Xenopus tropicalis (Western clawed frog) protein is Transmembrane protein 178B (tmem178b).